A 611-amino-acid polypeptide reads, in one-letter code: Elongation factor 4 (611 aa).

Residues 11 to 193 form the tr-type G domain; it reads KHIRNFSIVA…KIVKDVPAPT (183 aa). Residues 23-28 and 140-143 each bind GTP; these read DHGKST and NKID.

Belongs to the TRAFAC class translation factor GTPase superfamily. Classic translation factor GTPase family. LepA subfamily.

The protein resides in the cell membrane. It catalyses the reaction GTP + H2O = GDP + phosphate + H(+). Functionally, required for accurate and efficient protein synthesis under certain stress conditions. May act as a fidelity factor of the translation reaction, by catalyzing a one-codon backward translocation of tRNAs on improperly translocated ribosomes. Back-translocation proceeds from a post-translocation (POST) complex to a pre-translocation (PRE) complex, thus giving elongation factor G a second chance to translocate the tRNAs correctly. Binds to ribosomes in a GTP-dependent manner. This Limosilactobacillus reuteri (strain DSM 20016) (Lactobacillus reuteri) protein is Elongation factor 4.